A 605-amino-acid polypeptide reads, in one-letter code: SET domain-containing protein SNOG_11806 (605 aa).

The interval 68–132 (TLDLTGMKTP…SRKGTGGLRV (65 aa)) is disordered. Over residues 75-89 (KTPQPSRSPTVTRNV) the composition is skewed to polar residues. A compositionally biased stretch (acidic residues) spans 104-115 (ESADDDDDDLQD). The 107-residue stretch at 473-579 (PPVQIYRTAE…AGSEITVDYG (107 aa)) folds into the SET domain.

It belongs to the class V-like SAM-binding methyltransferase superfamily.

The protein is SET domain-containing protein SNOG_11806 of Phaeosphaeria nodorum (strain SN15 / ATCC MYA-4574 / FGSC 10173) (Glume blotch fungus).